We begin with the raw amino-acid sequence, 658 residues long: MSDVRVIIQRDSEREEHVVTTGTTAGELFPGQRTVVAARIGGELKDLSYELRDGESVEPVEISSEDGLNILRHSTAHVMAQAVQELFPEAKLGIGPPVKDGFYYDFDVEKPFTPEDLKAIEKKMQEIQKRGQKFSRRVVSDEAAREELADEPYKLELIGIKGSASSDDGADVEVGGGELTIYDNLDPKTGDLCWKDLCRGPHLPTTRFIPAFKLMRNAAAYWRGSEKNPMLQRIYGTAWPTKDELKAHLEFLEEAAKRDHRKLGNELDLFSFPDEIGPGLAVFHPKGGVIRRAMEDYSRRRHEEEGYEFVYSPHATKGKLFEKSGHLDWYADGMYPPMQLDDGVDYYLKPMNCPMHNLIFDARGRSYRELPLRLFEFGTVYRYEKSGVVHGLTRSRGFTQDDAHIYCTKEQMAEELDRTLTFVLNLLRDYGLTDFYLELSTKDPEKYVGSDETWEEATETLRQVAEKQGLPLVPDPGGAAFYGPKISVQCKDAIGRTWQMSTVQLDFNLPERFDLEYTGPDGSKQRPVMIHRALFGSIERFFAVLLEHYAGAFPVWLAPVQAVGIPIGDAHIPYLQEFAAKARKQGLRVDVDASSDRMQKKIRNQQKNKVPFMIIAGDEDMANGAVSFRYRDGSQENGIPVDEAIAKIAKAVEDRVQV.

Residues 1-61 enclose the TGS domain; sequence MSDVRVIIQR…RDGESVEPVE (61 aa). A catalytic region spans residues 259 to 554; that stretch reads DHRKLGNELD…LLEHYAGAFP (296 aa). Zn(2+)-binding residues include cysteine 353, histidine 404, and histidine 531.

Belongs to the class-II aminoacyl-tRNA synthetase family. As to quaternary structure, homodimer. The cofactor is Zn(2+).

It localises to the cytoplasm. It catalyses the reaction tRNA(Thr) + L-threonine + ATP = L-threonyl-tRNA(Thr) + AMP + diphosphate + H(+). In terms of biological role, catalyzes the attachment of threonine to tRNA(Thr) in a two-step reaction: L-threonine is first activated by ATP to form Thr-AMP and then transferred to the acceptor end of tRNA(Thr). Also edits incorrectly charged L-seryl-tRNA(Thr). The protein is Threonine--tRNA ligase of Streptomyces griseus subsp. griseus (strain JCM 4626 / CBS 651.72 / NBRC 13350 / KCC S-0626 / ISP 5235).